A 925-amino-acid polypeptide reads, in one-letter code: Proto-oncogene DBL (925 aa).

One can recognise a CRAL-TRIO domain in the interval Met1–His88. A Spectrin repeat occupies Trp221–Ser322. The DH domain occupies Leu495–Ser675. Residues Asn687–Leu809 enclose the PH domain.

This sequence belongs to the MCF2 family. As to quaternary structure, interacts with an array of inositol phospholipids such as phosphatidylinositol 3-phosphate (PI3P), phosphatidylinositol 4-phosphate (PI4P) and phosphatidylinositol 5-phosphate (PI5P). May interact with CCPG1. Post-translationally, phosphorylation by TNK2 enhances guanine nucleotide exchange factor (GEF) activity toward Rho family proteins. As to expression, isoform 1 is expressed only in brain. Isoform 3 is expressed in heart, kidney, spleen, liver and testis. Isoform 4 is expressed in brain, heart, kidney, testis, placenta, stomach and peripheral blood. The protein is detectable in brain, heart, kidney, intestine, muscle, lung and testis.

It localises to the cytoplasm. The protein resides in the membrane. Functionally, guanine nucleotide exchange factor (GEF) that modulates the Rho family of GTPases. Promotes the conversion of some member of the Rho family GTPase from the GDP-bound to the GTP-bound form. Isoform 1 exhibits no activity toward RHOA, RAC1 or CDC42. Isoform 2 exhibits decreased GEF activity toward CDC42. Isoform 3 exhibits a weak but significant activity toward RAC1 and CDC42. Isoform 4 exhibits significant activity toward RHOA and CDC42. The truncated DBL oncogene is active toward RHOA, RAC1 and CDC42. The sequence is that of Proto-oncogene DBL (MCF2) from Homo sapiens (Human).